The following is a 93-amino-acid chain: Co-chaperonin GroES 2 (93 aa).

Residues 1–20 are disordered; it reads MQPLGERIVVQREESETTTA.

Belongs to the GroES chaperonin family. In terms of assembly, heptamer of 7 subunits arranged in a ring. Interacts with the chaperonin GroEL.

It localises to the cytoplasm. Functionally, together with the chaperonin GroEL, plays an essential role in assisting protein folding. The GroEL-GroES system forms a nano-cage that allows encapsulation of the non-native substrate proteins and provides a physical environment optimized to promote and accelerate protein folding. GroES binds to the apical surface of the GroEL ring, thereby capping the opening of the GroEL channel. In Rhodopirellula baltica (strain DSM 10527 / NCIMB 13988 / SH1), this protein is Co-chaperonin GroES 2.